A 564-amino-acid polypeptide reads, in one-letter code: Dihydroxy-acid dehydratase (564 aa).

Mg(2+) is bound at residue Asp-80. Residue Cys-121 coordinates [2Fe-2S] cluster. Residues Asp-122 and Lys-123 each coordinate Mg(2+). The residue at position 123 (Lys-123) is an N6-carboxylysine. Cys-194 is a [2Fe-2S] cluster binding site. Position 447 (Glu-447) interacts with Mg(2+). The active-site Proton acceptor is the Ser-473.

The protein belongs to the IlvD/Edd family. As to quaternary structure, homodimer. Requires [2Fe-2S] cluster as cofactor. It depends on Mg(2+) as a cofactor.

It catalyses the reaction (2R)-2,3-dihydroxy-3-methylbutanoate = 3-methyl-2-oxobutanoate + H2O. The enzyme catalyses (2R,3R)-2,3-dihydroxy-3-methylpentanoate = (S)-3-methyl-2-oxopentanoate + H2O. The protein operates within amino-acid biosynthesis; L-isoleucine biosynthesis; L-isoleucine from 2-oxobutanoate: step 3/4. Its pathway is amino-acid biosynthesis; L-valine biosynthesis; L-valine from pyruvate: step 3/4. Its function is as follows. Functions in the biosynthesis of branched-chain amino acids. Catalyzes the dehydration of (2R,3R)-2,3-dihydroxy-3-methylpentanoate (2,3-dihydroxy-3-methylvalerate) into 2-oxo-3-methylpentanoate (2-oxo-3-methylvalerate) and of (2R)-2,3-dihydroxy-3-methylbutanoate (2,3-dihydroxyisovalerate) into 2-oxo-3-methylbutanoate (2-oxoisovalerate), the penultimate precursor to L-isoleucine and L-valine, respectively. In Listeria monocytogenes serotype 4a (strain HCC23), this protein is Dihydroxy-acid dehydratase.